A 324-amino-acid polypeptide reads, in one-letter code: Beta-ketoacyl-[acyl-carrier-protein] synthase III (324 aa).

Residues cysteine 114 and histidine 246 contribute to the active site. Positions 247-251 (QANLR) are ACP-binding. The active site involves asparagine 276.

It belongs to the thiolase-like superfamily. FabH family. Homodimer.

It is found in the cytoplasm. The catalysed reaction is malonyl-[ACP] + acetyl-CoA + H(+) = 3-oxobutanoyl-[ACP] + CO2 + CoA. The protein operates within lipid metabolism; fatty acid biosynthesis. Catalyzes the condensation reaction of fatty acid synthesis by the addition to an acyl acceptor of two carbons from malonyl-ACP. Catalyzes the first condensation reaction which initiates fatty acid synthesis and may therefore play a role in governing the total rate of fatty acid production. Possesses both acetoacetyl-ACP synthase and acetyl transacylase activities. Its substrate specificity determines the biosynthesis of branched-chain and/or straight-chain of fatty acids. This Campylobacter jejuni subsp. doylei (strain ATCC BAA-1458 / RM4099 / 269.97) protein is Beta-ketoacyl-[acyl-carrier-protein] synthase III.